A 317-amino-acid chain; its full sequence is Methionyl-tRNA formyltransferase (317 aa).

109–112 serves as a coordination point for (6S)-5,6,7,8-tetrahydrofolate; sequence SLLP.

This sequence belongs to the Fmt family.

It carries out the reaction L-methionyl-tRNA(fMet) + (6R)-10-formyltetrahydrofolate = N-formyl-L-methionyl-tRNA(fMet) + (6S)-5,6,7,8-tetrahydrofolate + H(+). In terms of biological role, attaches a formyl group to the free amino group of methionyl-tRNA(fMet). The formyl group appears to play a dual role in the initiator identity of N-formylmethionyl-tRNA by promoting its recognition by IF2 and preventing the misappropriation of this tRNA by the elongation apparatus. In Desulforamulus reducens (strain ATCC BAA-1160 / DSM 100696 / MI-1) (Desulfotomaculum reducens), this protein is Methionyl-tRNA formyltransferase.